Reading from the N-terminus, the 799-residue chain is Disintegrin and metalloproteinase domain-containing protein B (799 aa).

Positions 1-23 (MKAFSCLLSVIATAASLFQHVDA) are cleaved as a signal peptide. Residues 24–707 (RSHARDKLNN…VSDWVSRHKP (684 aa)) lie on the Extracellular side of the membrane. Residues N33, N227, N228, N314, and N408 are each glycosylated (N-linked (GlcNAc...) asparagine). A Peptidase M12B domain is found at 272–511 (KVALIGVVAD…RTILTSCLTT (240 aa)). 3 disulfides stabilise this stretch: C396-C496, C449-C460, and C581-C601. H432 is a binding site for Zn(2+). E433 is an active-site residue. Zn(2+) is bound by residues H436 and H442. Positions 520-609 (GQQCGNGIVE…DCPHDIHSKD (90 aa)) constitute a Disintegrin domain. The chain crosses the membrane as a helical span at residues 708–728 (IVIGVAVGAGCLLLLAIASCI). Over 729–799 (CGRSRRQRPR…PGHLPSTRYA (71 aa)) the chain is Cytoplasmic. Residues 753–799 (VYNGWNGAPPNAQQSSPGGHPPYNNIPPPINAPPPAYPGHLPSTRYA) are disordered. Pro residues predominate over residues 776–789 (NNIPPPINAPPPAY).

Zn(2+) serves as cofactor.

Its subcellular location is the membrane. Functionally, probable zinc protease. The sequence is that of Disintegrin and metalloproteinase domain-containing protein B (ADM-B) from Arthroderma benhamiae (strain ATCC MYA-4681 / CBS 112371) (Trichophyton mentagrophytes).